We begin with the raw amino-acid sequence, 384 residues long: MSDVAARLETIRAAHLYRRLRTLSTPQDREVVIDGRRVLLFSSNSYLGLGINAHIRRSAVRALEKFGTGAGGSRLVTGNMTPHMQLESALAAFKGSESALAFTSGYTANMGVISALCHKDTVIFSDALNHASIIDGCRLARGRTVVYAHNDMDDLLEKIRQLRPRQGFIITDGVFSMDGDLARLPELAHIARSYGLTLMVDDAHATGVLGATGRGTLEHFGLSHEDVPVVTGTLSKAIPSEGGFVCGSEILCELLRNTARPFIFTTAPSPAAVAAATAGIGHIAAHPGLVRRLQDNVAYFTGSLAEQGMHVPGQSPIIPIMAGEEEKAVRAAEALLALGVFAPCIRYPTVPRGQARLRLTVMASHTRDDLDHAAVSLRKALAGV.

A substrate-binding site is contributed by Arg-18. 105 to 106 (GY) contacts pyridoxal 5'-phosphate. His-130 is a binding site for substrate. Residues Ser-176, 201-204 (DDAH), and 233-236 (TLSK) each bind pyridoxal 5'-phosphate. The residue at position 236 (Lys-236) is an N6-(pyridoxal phosphate)lysine. Substrate is bound at residue Thr-349.

This sequence belongs to the class-II pyridoxal-phosphate-dependent aminotransferase family. BioF subfamily. Homodimer. The cofactor is pyridoxal 5'-phosphate.

It catalyses the reaction 6-carboxyhexanoyl-[ACP] + L-alanine + H(+) = (8S)-8-amino-7-oxononanoate + holo-[ACP] + CO2. Its pathway is cofactor biosynthesis; biotin biosynthesis. In terms of biological role, catalyzes the decarboxylative condensation of pimeloyl-[acyl-carrier protein] and L-alanine to produce 8-amino-7-oxononanoate (AON), [acyl-carrier protein], and carbon dioxide. The sequence is that of Putative 8-amino-7-oxononanoate synthase (bioF) from Desulfovibrio desulfuricans (strain ATCC 27774 / DSM 6949 / MB).